A 71-amino-acid polypeptide reads, in one-letter code: UPF0346 protein SPG_0874 (71 aa).

The protein belongs to the UPF0346 family.

This chain is UPF0346 protein SPG_0874, found in Streptococcus pneumoniae serotype 19F (strain G54).